A 263-amino-acid chain; its full sequence is Norsolorinic acid ketoreductase stcE (263 aa).

Residues Leu-29, Asp-76, Asn-105, Tyr-177, Lys-181, Ile-208, and Ser-210 each contribute to the NADP(+) site. The active-site Proton donor is Tyr-177. Catalysis depends on Lys-181, which acts as the Lowers pKa of active site Tyr.

The protein belongs to the short-chain dehydrogenases/reductases (SDR) family.

It catalyses the reaction (1'S)-averantin + NADP(+) = norsolorinic acid + NADPH + H(+). It functions in the pathway mycotoxin biosynthesis; sterigmatocystin biosynthesis. Its function is as follows. Short chain dehydrogenase; part of the gene cluster that mediates the biosynthesis of sterigmatocystin (ST), a polyketide-derived furanocoumarin which is part of the most toxic and carcinogenic compounds among the known mycotoxins. The first step in the biosynthesis of sterigmatocystin is the production of hexanoate by the fatty acid synthase (FAS) units stcJ and stcK. The polyketide backbone is assembled by the non-reducing polyketide synthase stcA by condensation of the starter hexanoyl-CoA and 7 malonyl-CoA extender units followed by cyclization and release of norsolorinic acid. Norsolorinic acid is the first stable intermediate in the biosynthesis of sterigmatocystin and is converted into averantin (AVN) by the ketoreductase stcE which reduces the hexanoate ketone to an alcohol. Averantin is then oxidized into 5'-hydroxyaverantin (HAVN) by the cytochrome P450 monooxygenase stcF. 5'-hydroxyaverantin is further converted to 5'-oxyaverantin (OAVN) by the 5'-hydroxyaverantin dehydrogenase stcG. The next step is the conversion of OAVN into averufin (AVF) which is catalyzed by a yet to be identified enzyme. The cytochrome P450 monooxygenase stcB and the flavin-binding monooxygenase stcW are both required for the conversion of averufin to 1-hydroxyversicolorone. The esterase stcI probably catalyzes the formation of versiconal hemiacetal acetate from 1-hydroxyversicolorone. The oxydoreductase stcN then probably catalyzes the biosynthetic step from versiconal to versicolorin B (VERB). The next step is performed by the versicolorin B desaturase stcL to produce versicolorin A (VERA). The ketoreductase stcU and the cytochrome P450 monooxygenase stcS are involved in the conversion of versicolorin A to demethylsterigmatocystin. The Baeyer-Villiger oxidas stcQ and the reductase stcR might be involved in the biosynthetic step from versicolorin A to demethylsterigmatocystin. The final step in the biosynthesis of sterigmatocystin is the methylation of demethylsterigmatocystin catalyzed by the methyltransferase stcP. This chain is Norsolorinic acid ketoreductase stcE, found in Emericella nidulans (strain FGSC A4 / ATCC 38163 / CBS 112.46 / NRRL 194 / M139) (Aspergillus nidulans).